Consider the following 126-residue polypeptide: Fluoride-specific ion channel FluC (126 aa).

4 helical membrane-spanning segments follow: residues 5 to 25, 39 to 59, 69 to 89, and 103 to 123; these read FILA…LVGI, TLFI…LFAV, IFLV…SLDT, and AYMI…IQIV. Gly77 and Thr80 together coordinate Na(+).

The protein belongs to the fluoride channel Fluc/FEX (TC 1.A.43) family.

It is found in the cell inner membrane. It catalyses the reaction fluoride(in) = fluoride(out). With respect to regulation, na(+) is not transported, but it plays an essential structural role and its presence is essential for fluoride channel function. Its function is as follows. Fluoride-specific ion channel. Important for reducing fluoride concentration in the cell, thus reducing its toxicity. This Nitrobacter winogradskyi (strain ATCC 25391 / DSM 10237 / CIP 104748 / NCIMB 11846 / Nb-255) protein is Fluoride-specific ion channel FluC.